The chain runs to 239 residues: Fatty acid metabolism regulator protein (239 aa).

The 69-residue stretch at 6–74 (QSPAGFAEEY…HGKPTKVNNF (69 aa)) folds into the HTH gntR-type domain. The H-T-H motif DNA-binding region spans 34–53 (ERELSELIGVTRTTLREVLQ).

Homodimer.

It localises to the cytoplasm. Multifunctional regulator of fatty acid metabolism. The polypeptide is Fatty acid metabolism regulator protein (Serratia proteamaculans (strain 568)).